A 99-amino-acid chain; its full sequence is ATP-dependent Clp protease adapter protein ClpS (99 aa).

It belongs to the ClpS family. As to quaternary structure, binds to the N-terminal domain of the chaperone ClpA.

Its function is as follows. Involved in the modulation of the specificity of the ClpAP-mediated ATP-dependent protein degradation. The protein is ATP-dependent Clp protease adapter protein ClpS of Helicobacter hepaticus (strain ATCC 51449 / 3B1).